We begin with the raw amino-acid sequence, 184 residues long: Intraflagellar transport protein 22 homolog (184 aa).

GTP-binding positions include 10-17, 62-66, and 122-125; these read GPTESGKT, DCGGD, and KKPG.

It belongs to the small GTPase superfamily. Rab family.

The sequence is that of Intraflagellar transport protein 22 homolog (ift22) from Xenopus tropicalis (Western clawed frog).